Reading from the N-terminus, the 604-residue chain is Prostaglandin G/H synthase 2 (604 aa).

Positions Met1–Ala17 are cleaved as a signal peptide. An EGF-like domain is found at Ala18–Thr55. Disulfide bonds link Cys21/Cys32, Cys22/Cys145, Cys26/Cys42, and Cys44/Cys54. Asn53 carries an N-linked (GlcNAc...) asparagine glycan. Residue Arg106 coordinates substrate. An N-linked (GlcNAc...) asparagine glycan is attached at Asn130. Residue His193 is the Proton acceptor of the active site. A substrate-binding site is contributed by Tyr341. Tyr371 acts as the For cyclooxygenase activity in catalysis. His374 is a binding site for heme b. N-linked (GlcNAc...) asparagine glycosylation is present at Asn396. Cys526 carries the post-translational modification S-nitrosocysteine. An intrachain disulfide couples Cys555 to Cys561. An N-linked (GlcNAc...) asparagine glycan is attached at Asn580.

Belongs to the prostaglandin G/H synthase family. As to quaternary structure, homodimer. The cofactor is heme b. Post-translationally, S-nitrosylation by NOS2 (iNOS) activates enzyme activity. S-nitrosylation may take place on different Cys residues in addition to Cys-526.

The protein localises to the microsome membrane. The protein resides in the endoplasmic reticulum membrane. It localises to the nucleus inner membrane. It is found in the nucleus outer membrane. It catalyses the reaction (5Z,8Z,11Z,14Z)-eicosatetraenoate + AH2 + 2 O2 = prostaglandin H2 + A + H2O. It carries out the reaction (5Z,8Z,11Z,14Z)-eicosatetraenoate + 2 O2 = prostaglandin G2. The enzyme catalyses prostaglandin G2 + AH2 = prostaglandin H2 + A + H2O. The catalysed reaction is (5Z,8Z,11Z,14Z,17Z)-eicosapentaenoate + 2 O2 = prostaglandin G3. It catalyses the reaction prostaglandin G3 + AH2 = prostaglandin H3 + A + H2O. It carries out the reaction (8Z,11Z,14Z)-eicosatrienoate + 2 O2 = prostaglandin G1. The enzyme catalyses prostaglandin G1 + AH2 = prostaglandin H1 + A + H2O. The catalysed reaction is 2-(5Z,8Z,11Z,14Z)-eicosatetraenoyl-sn-glycero-3-phosphoethanolamine + 2 O2 = 2-(prostaglandin G2)-sn-glycero-3-phosphoethanolamine. It catalyses the reaction 2-(prostaglandin G2)-sn-glycero-3-phosphoethanolamine + AH2 = 2-(prostaglandin H2)-sn-glycero-3-phosphoethanolamine + A + H2O. It carries out the reaction 2-(5Z,8Z,11Z,14Z)-eicosatetraenoyl-sn-glycero-3-phosphocholine + 2 O2 = 2-(prostaglandin G2)-sn-glycero-3-phosphocholine. The enzyme catalyses 2-(prostaglandin G2)-sn-glycero-3-phosphocholine + AH2 = 2-(prostaglandin H2)-sn-glycero-3-phosphocholine + A + H2O. The catalysed reaction is (15S)-hydroperoxy-(5Z,8Z,11Z,13E)-eicosatetraenoate + AH2 = (15S)-hydroxy-(5Z,8Z,11Z,13E)-eicosatetraenoate + A + H2O. It catalyses the reaction 2-(5Z,8Z,11Z,14Z)-eicosatetraenoyl-sn-glycero-3-phosphocholine + AH2 + O2 = 2-[(15S)-hydroxy-(5Z,8Z,11Z,13E)-eicosatetraenoyl]-sn-glycero-3-phosphocholine + A + H2O. It carries out the reaction 2-(5Z,8Z,11Z,14Z)-eicosatetraenoyl-sn-glycero-3-phosphocholine + AH2 + O2 = 2-[(15R)-hydroxy-(5Z,8Z,11Z,13E)-eicosatetraenoyl]-sn-glycero-3-phosphocholine + A + H2O. The enzyme catalyses 2-(5Z,8Z,11Z,14Z)-eicosatetraenoyl-sn-glycero-3-phosphocholine + AH2 + O2 = 2-[(11R)-hydroxy-(5Z,8Z,12E,14Z)-eicosatetraenoyl]-sn-glycero-3-phosphocholine + A + H2O. The catalysed reaction is (9Z,12Z)-octadecadienoate + AH2 + O2 = 9-hydroxy-(10E,12Z)-octadecadienoate + A + H2O. It catalyses the reaction (9Z,12Z)-octadecadienoate + AH2 + O2 = 13-hydroxy-(9Z,11E)-octadecadienoate + A + H2O. It carries out the reaction (5Z,8Z,11Z,14Z)-eicosatetraenoate + AH2 + O2 = (15R)-hydroxy-(5Z,8Z,11Z,13E)-eicosatetraenoate + A + H2O. The enzyme catalyses (5Z,8Z,11Z,14Z)-eicosatetraenoate + AH2 + O2 = (11R)-hydroxy-(5Z,8Z,12E,14Z)-eicosatetraenoate + A + H2O. The catalysed reaction is (5Z,8Z,11Z,14Z,17Z)-eicosapentaenoate + AH2 + O2 = (11R)-hydroxy-(5Z,8Z,12E,14Z,17Z)-eicosapentaenoate + A + H2O. It catalyses the reaction (5Z,8Z,11Z,14Z,17Z)-eicosapentaenoate + AH2 + O2 = (18S)-hydroxy-(5Z,8Z,11Z,14Z,16E)-eicosapentaenoate + A + H2O. It carries out the reaction (5Z,8Z,11Z,14Z,17Z)-eicosapentaenoate + AH2 + O2 = (18R)-hydroxy-(5Z,8Z,11Z,14Z,16E)-eicosapentaenoate + A + H2O. The enzyme catalyses (5Z,8Z,11Z,14Z,17Z)-eicosapentaenoate + AH2 + O2 = (15R)-hydroxy-(5Z,8Z,11Z,13E,17Z)-eicosapentaenoate + A + H2O. The catalysed reaction is (5Z,8Z,11Z,14Z,17Z)-eicosapentaenoate + AH2 + O2 = (15S)-hydroxy-(5Z,8Z,11Z,13E,17Z)-eicosapentaenoate + A + H2O. It catalyses the reaction (7Z,10Z,13Z,16Z,19Z)-docosapentaenoate + AH2 + O2 = 13R-hydroxy-(7Z,10Z,14E,16Z,19Z)-docosapentaenoate + A + H2O. It carries out the reaction (4Z,7Z,10Z,13Z,16Z,19Z)-docosahexaenoate + AH2 + O2 = 13-hydroxy-(4Z,7Z,10Z,14E,16Z,19Z)-docosahexaenoate + A + H2O. The enzyme catalyses (5S)-hydroxy-(6E,8Z,11Z,14Z)-eicosatetraenoate + AH2 + O2 = (5S,15R)-dihydroxy-(6E,8Z,11Z,13E)-eicosatetraenoate + A + H2O. The catalysed reaction is (4Z,7Z,10Z,13Z,16Z,19Z)-docosahexaenoate + AH2 + O2 = 17R-hydroxy-(4Z,7Z,10Z,13Z,15E,19Z)-docosahexaenoate + A + H2O. It catalyses the reaction (5S)-hydroxy-(6E,8Z,11Z,14Z)-eicosatetraenoate + AH2 + O2 = (5S,15S)-dihydroxy-(6E,8Z,11Z,13E)-eicosatetraenoate + A + H2O. It carries out the reaction (5S)-hydroxy-(6E,8Z,11Z,14Z)-eicosatetraenoate + AH2 + O2 = (5S,11R)-dihydroxy-(6E,8Z,12E,14Z)-eicosatetraenoate + A + H2O. The enzyme catalyses 2-(5Z,8Z,11Z,14Z-eicosatetraenoyl)-glycerol + 2 O2 = 2-glyceryl-prostaglandin G2. The catalysed reaction is 2-glyceryl-prostaglandin G2 + AH2 = 2-glyceryl-prostaglandin H2 + A + H2O. It catalyses the reaction (5Z,8Z,11Z,14Z)-eicosatetraenoate + O2 = (15R)-hydroperoxy-(5Z,8Z,11Z,13E)-eicosatetraenoate. It carries out the reaction (5Z,8Z,11Z,14Z)-eicosatetraenoate + O2 = 11R-hydroperoxy-(5Z,8Z,12E,14Z)-eicosatetraenoate. The enzyme catalyses (9Z,12Z)-octadecadienoate + AH2 + O2 = (9R)-hydroxy-(10E,12Z)-octadecadienoate + A + H2O. The catalysed reaction is (9Z,12Z)-octadecadienoate + AH2 + O2 = (9S)-hydroxy-(10E,12Z)-octadecadienoate + A + H2O. It catalyses the reaction (9Z,12Z)-octadecadienoate + AH2 + O2 = (13S)-hydroxy-(9Z,11E)-octadecadienoate + A + H2O. It carries out the reaction (9Z,12Z)-octadecadienoate + AH2 + O2 = (13R)-hydroxy-(9Z,11E)-octadecadienoate + A + H2O. It functions in the pathway lipid metabolism; prostaglandin biosynthesis. In terms of biological role, dual cyclooxygenase and peroxidase in the biosynthesis pathway of prostanoids, a class of C20 oxylipins mainly derived from arachidonate ((5Z,8Z,11Z,14Z)-eicosatetraenoate, AA, C20:4(n-6)), with a particular role in the inflammatory response. The cyclooxygenase activity oxygenates AA to the hydroperoxy endoperoxide prostaglandin G2 (PGG2), and the peroxidase activity reduces PGG2 to the hydroxy endoperoxide prostaglandin H2 (PGH2), the precursor of all 2-series prostaglandins and thromboxanes. This complex transformation is initiated by abstraction of hydrogen at carbon 13 (with S-stereochemistry), followed by insertion of molecular O2 to form the endoperoxide bridge between carbon 9 and 11 that defines prostaglandins. The insertion of a second molecule of O2 (bis-oxygenase activity) yields a hydroperoxy group in PGG2 that is then reduced to PGH2 by two electrons. Similarly catalyzes successive cyclooxygenation and peroxidation of dihomo-gamma-linoleate (DGLA, C20:3(n-6)) and eicosapentaenoate (EPA, C20:5(n-3)) to corresponding PGH1 and PGH3, the precursors of 1- and 3-series prostaglandins. In an alternative pathway of prostanoid biosynthesis, converts 2-arachidonoyl lysophopholipids to prostanoid lysophopholipids, which are then hydrolyzed by intracellular phospholipases to release free prostanoids. Metabolizes 2-arachidonoyl glycerol yielding the glyceryl ester of PGH2, a process that can contribute to pain response. Generates lipid mediators from n-3 and n-6 polyunsaturated fatty acids (PUFAs) via a lipoxygenase-type mechanism. Oxygenates PUFAs to hydroperoxy compounds and then reduces them to corresponding alcohols. Plays a role in the generation of resolution phase interaction products (resolvins) during both sterile and infectious inflammation. Metabolizes docosahexaenoate (DHA, C22:6(n-3)) to 17R-HDHA, a precursor of the D-series resolvins (RvDs). As a component of the biosynthetic pathway of E-series resolvins (RvEs), converts eicosapentaenoate (EPA, C20:5(n-3)) primarily to 18S-HEPE that is further metabolized by ALOX5 and LTA4H to generate 18S-RvE1 and 18S-RvE2. In vascular endothelial cells, converts docosapentaenoate (DPA, C22:5(n-3)) to 13R-HDPA, a precursor for 13-series resolvins (RvTs) shown to activate macrophage phagocytosis during bacterial infection. In activated leukocytes, contributes to oxygenation of hydroxyeicosatetraenoates (HETE) to diHETES (5,15-diHETE and 5,11-diHETE). Can also use linoleate (LA, (9Z,12Z)-octadecadienoate, C18:2(n-6)) as substrate and produce hydroxyoctadecadienoates (HODEs) in a regio- and stereospecific manner, being (9R)-HODE ((9R)-hydroxy-(10E,12Z)-octadecadienoate) and (13S)-HODE ((13S)-hydroxy-(9Z,11E)-octadecadienoate) its major products. During neuroinflammation, plays a role in neuronal secretion of specialized preresolving mediators (SPMs) 15R-lipoxin A4 that regulates phagocytic microglia. The polypeptide is Prostaglandin G/H synthase 2 (PTGS2) (Cavia porcellus (Guinea pig)).